The following is a 185-amino-acid chain: Ribosome-recycling factor (185 aa).

This sequence belongs to the RRF family.

Its subcellular location is the cytoplasm. Functionally, responsible for the release of ribosomes from messenger RNA at the termination of protein biosynthesis. May increase the efficiency of translation by recycling ribosomes from one round of translation to another. This chain is Ribosome-recycling factor, found in Finegoldia magna (strain ATCC 29328 / DSM 20472 / WAL 2508) (Peptostreptococcus magnus).